The primary structure comprises 332 residues: Small ribosomal subunit biogenesis GTPase RsgA (332 aa).

A CP-type G domain is found at 103–259; the sequence is RQQLIAANLD…LIDTPGMREL (157 aa). Residues 148-151 and 201-209 contribute to the GTP site; these read TKVD and GSSGAGKST. Residues Cys281, Cys286, His288, and Cys294 each coordinate Zn(2+).

It belongs to the TRAFAC class YlqF/YawG GTPase family. RsgA subfamily. Monomer. Associates with 30S ribosomal subunit, binds 16S rRNA. Zn(2+) serves as cofactor.

The protein localises to the cytoplasm. One of several proteins that assist in the late maturation steps of the functional core of the 30S ribosomal subunit. Helps release RbfA from mature subunits. May play a role in the assembly of ribosomal proteins into the subunit. Circularly permuted GTPase that catalyzes slow GTP hydrolysis, GTPase activity is stimulated by the 30S ribosomal subunit. The chain is Small ribosomal subunit biogenesis GTPase RsgA from Xylella fastidiosa (strain M12).